Here is a 435-residue protein sequence, read N- to C-terminus: Antho-RFamide neuropeptides type 1 (435 aa).

An N-terminal signal peptide occupies residues 1 to 22 (MTTVSYVTILLTVLVQVLTSDA). Residues 23–193 (KATNNKRELS…SVPGRYGREL (171 aa)) constitute a propeptide that is removed on maturation. Q194 is modified (pyrrolidone carboxylic acid). F197 carries the phenylalanine amide modification. A propeptide spanning residues 199-201 (REL) is cleaved from the precursor. F205 carries the post-translational modification Phenylalanine amide. Residues 207-209 (REA) constitute a propeptide that is removed on maturation. A Phenylalanine amide modification is found at F213. Residues 215–217 (REL) constitute a propeptide that is removed on maturation. At F221 the chain carries Phenylalanine amide. A propeptide spanning residues 223-225 (REF) is cleaved from the precursor. The residue at position 229 (F229) is a Phenylalanine amide. Over residues 230–371 (GREDQGRFGR…EDIAEADQGR (142 aa)) the composition is skewed to basic and acidic residues. 2 disordered regions span residues 230–374 (GRED…RFGR) and 386–435 (AKKR…AKTS). Positions 231 to 233 (RED) are excised as a propeptide. F237 carries the post-translational modification Phenylalanine amide. The propeptide occupies 239–241 (RED). Phenylalanine amide is present on F245. Positions 247-249 (RED) are excised as a propeptide. F253 bears the Phenylalanine amide mark. A propeptide spanning residues 255–257 (RED) is cleaved from the precursor. The residue at position 261 (F261) is a Phenylalanine amide. Positions 263-265 (RED) are excised as a propeptide. Residue F269 is modified to Phenylalanine amide. Residues 271–273 (RED) constitute a propeptide that is removed on maturation. F277 carries the post-translational modification Phenylalanine amide. Positions 279–281 (REL) are excised as a propeptide. F285 carries the post-translational modification Phenylalanine amide. A propeptide spanning residues 287-289 (REF) is cleaved from the precursor. At F293 the chain carries Phenylalanine amide. Positions 295-297 (RED) are excised as a propeptide. F301 is subject to Phenylalanine amide. Positions 303 to 305 (RED) are excised as a propeptide. F309 is modified (phenylalanine amide). Residues 311–313 (REL) constitute a propeptide that is removed on maturation. F317 carries the post-translational modification Phenylalanine amide. Positions 319–321 (RED) are excised as a propeptide. F325 carries the phenylalanine amide modification. A propeptide spanning residues 327–329 (RED) is cleaved from the precursor. Phenylalanine amide is present on F333. Residues 335–342 (REDLAKED) constitute a propeptide that is removed on maturation. F346 is modified (phenylalanine amide). A propeptide spanning residues 348-355 (REDLAKED) is cleaved from the precursor. F359 carries the post-translational modification Phenylalanine amide. Positions 361 to 368 (REDIAEAD) are excised as a propeptide. At F372 the chain carries Phenylalanine amide. Residues 374–435 (RNAAAAAAAA…KSDDALAKTS (62 aa)) constitute a propeptide that is removed on maturation. The span at 398–435 (SDPKPQTRFRDGKDMQEKRKVEKKDKIEKSDDALAKTS) shows a compositional bias: basic and acidic residues.

The protein belongs to the FARP (FMRFamide related peptide) family.

The protein localises to the secreted. In terms of biological role, not known but it could act as a transmitter at neuromuscular synapses. The protein is Antho-RFamide neuropeptides type 1 of Anthopleura elegantissima (Green aggregating anemone).